We begin with the raw amino-acid sequence, 378 residues long: GDP-mannose 3,5-epimerase 1 (378 aa).

NAD(+) is bound by residues 36 to 62 (GAGGFIGSHIARRLKSEGHYIIASDWK), Asp60, and Asp80. Substrate-binding positions include Gly105 and 145–147 (SAC). Residues Tyr175 and Lys179 each contribute to the NAD(+) site. Tyr175 (proton acceptor) is an active-site residue. Substrate contacts are provided by residues Asn204, 217 to 219 (EKA), Lys226, 242 to 244 (QTR), Arg307, and Ser357.

It belongs to the NAD(P)-dependent epimerase/dehydratase family. In terms of assembly, homodimer. It depends on NAD(+) as a cofactor.

It carries out the reaction GDP-alpha-D-mannose = GDP-beta-L-gulose. It catalyses the reaction GDP-beta-L-gulose = GDP-beta-L-galactose. Its pathway is cofactor biosynthesis; L-ascorbate biosynthesis via GDP-alpha-D-mannose pathway; L-ascorbate from GDP-alpha-D-mannose: step 1/5. Its activity is regulated as follows. Strongly activated by NAD. Activated by NADP. Slightly activated by NADH and NADPH. Inhibited by GDP. Functionally, catalyzes a reversible epimerization of GDP-D-mannose that precedes the committed step in the biosynthesis of vitamin C (L-ascorbate), resulting in the hydrolysis of the highly energetic glycosyl-pyrophosphoryl linkage. Able to catalyze 2 distinct epimerization reactions and can release both GDP-L-galactose and GDP-L-gulose from GDP-mannose. This is GDP-mannose 3,5-epimerase 1 (GME-1) from Oryza sativa subsp. japonica (Rice).